A 202-amino-acid chain; its full sequence is uncharacterized protein (202 aa).

Residues 1-20 (MVGAVTQIADRPTDPSPWSP) form a disordered region. The HTH tetR-type domain maps to 19–79 (SPRETELLAV…AAFIEGIRQV (61 aa)).

This is an uncharacterized protein from Mycobacterium bovis (strain ATCC BAA-935 / AF2122/97).